Consider the following 204-residue polypeptide: Lymphotoxin-alpha (204 aa).

An N-terminal signal peptide occupies residues 1-33 (MTPPGRLYLLRVRSAPVLLLLGLLLGLPPGAQG). In terms of domain architecture, THD spans 62–204 (PAAHLIGDPS…SSVFFGAFAL (143 aa)). Residue Asn95 is glycosylated (N-linked (GlcNAc...) asparagine). Cys119 and Cys155 are joined by a disulfide.

It belongs to the tumor necrosis factor family. Homotrimer, and heterotrimer of either two LTB and one LTA subunits or (less prevalent) two LTA and one LTB subunits. Interacts with TNFRSF14.

It localises to the secreted. The protein resides in the membrane. Cytokine that in its homotrimeric form binds to TNFRSF1A/TNFR1, TNFRSF1B/TNFBR and TNFRSF14/HVEM. In its heterotrimeric form with LTB binds to TNFRSF3/LTBR. Lymphotoxin is produced by lymphocytes and is cytotoxic for a wide range of tumor cells in vitro and in vivo. The protein is Lymphotoxin-alpha (LTA) of Canis lupus familiaris (Dog).